We begin with the raw amino-acid sequence, 820 residues long: Serine/threonine-protein phosphatase 4 regulatory subunit 3B (820 aa).

The region spanning 1–100 (MSDTRRRVKV…DEIWEKICQV (100 aa)) is the WH1 domain. Residues Ser117 and Ser663 each carry the phosphoserine modification. The interval 687–820 (EDDDEEGKAV…SPRKRPRLGS (134 aa)) is disordered. A compositionally biased stretch (basic and acidic residues) spans 701–732 (EKSKTEDDFPDSYEKFMETKKAKESEDKENLP). The segment covering 744-789 (FSHSPSATNGTNSTNSKSVVSQTTPASSNVASSKTTSLATSVTATK) has biased composition (polar residues). Residues 798–809 (YPDDEEEDEEEE) are compositionally biased toward acidic residues. Residue Ser811 is modified to Phosphoserine.

The protein belongs to the SMEK family. As to quaternary structure, serine/threonine-protein phosphatase 4 (PP4) occurs in different assemblies of the catalytic and one or more regulatory subunits. Component of the PP4 complex PPP4C-PPP4R2-PPP4R3B.

It localises to the cytoplasm. It is found in the cytoskeleton. The protein localises to the microtubule organizing center. Its subcellular location is the centrosome. The protein resides in the nucleus. In terms of biological role, regulatory subunit of serine/threonine-protein phosphatase 4 (PP4). May regulate the activity of PPP4C at centrosomal microtubule organizing centers. This chain is Serine/threonine-protein phosphatase 4 regulatory subunit 3B, found in Mus musculus (Mouse).